The primary structure comprises 503 residues: 2-isopropylmalate synthase (503 aa).

One can recognise a Pyruvate carboxyltransferase domain in the interval Leu4–Tyr264. Mn(2+)-binding residues include Asp13, His201, His203, and Asn237. A regulatory domain region spans residues Lys388–Asp503.

Belongs to the alpha-IPM synthase/homocitrate synthase family. LeuA type 1 subfamily. As to quaternary structure, homodimer. Mn(2+) serves as cofactor.

The protein localises to the cytoplasm. The catalysed reaction is 3-methyl-2-oxobutanoate + acetyl-CoA + H2O = (2S)-2-isopropylmalate + CoA + H(+). Its pathway is amino-acid biosynthesis; L-leucine biosynthesis; L-leucine from 3-methyl-2-oxobutanoate: step 1/4. Functionally, catalyzes the condensation of the acetyl group of acetyl-CoA with 3-methyl-2-oxobutanoate (2-ketoisovalerate) to form 3-carboxy-3-hydroxy-4-methylpentanoate (2-isopropylmalate). The chain is 2-isopropylmalate synthase from Dictyoglomus turgidum (strain DSM 6724 / Z-1310).